Consider the following 313-residue polypeptide: UPF0761 membrane protein VV0203 (313 aa).

The next 6 membrane-spanning stretches (helical) occupy residues 41 to 61 (YLAYITLLSIVPMLTVLLSIL), 104 to 124 (MTAVGAAFLFVAALMLISNID), 139 to 159 (AVFSFSMYWMVLTLGPILVGA), 185 to 205 (LLRWLPFILSSSAFVGLYLLV), 215 to 235 (AVVGAMIAAVLFELSKKGFAA), and 249 to 269 (ALAAIPILFVWVYLCWLIVLI). The disordered stretch occupies residues 293-313 (LPNNDTELEKDTQRDRFDSES). The span at 299 to 313 (ELEKDTQRDRFDSES) shows a compositional bias: basic and acidic residues.

It belongs to the UPF0761 family.

Its subcellular location is the cell inner membrane. The polypeptide is UPF0761 membrane protein VV0203 (Vibrio vulnificus (strain YJ016)).